The chain runs to 420 residues: Carbohydrate sulfotransferase 12 (420 aa).

At 1 to 5 the chain is on the cytoplasmic side; that stretch reads MAKSR. A helical; Signal-anchor for type II membrane protein membrane pass occupies residues 6 to 26; that stretch reads LFCLLVALGSVFMILFIIVYW. The Lumenal segment spans residues 27–420; it reads DNVGTANLNL…YPKPDDLLSV (394 aa). N-linked (GlcNAc...) asparagine glycans are attached at residues Asn-76 and Asn-139. 176-182 contributes to the 3'-phosphoadenylyl sulfate binding site; that stretch reads PKVACTN. A glycan (N-linked (GlcNAc...) asparagine) is linked at Asn-215. 3'-phosphoadenylyl sulfate is bound at residue 251–259; that stretch reads RDPFVRLIS. 2 N-linked (GlcNAc...) asparagine glycosylation sites follow: Asn-286 and Asn-376.

Belongs to the sulfotransferase 2 family.

The protein localises to the golgi apparatus membrane. The catalysed reaction is chondroitin beta-D-glucuronate + n 3'-phosphoadenylyl sulfate = chondroitin 4'-sulfate + n adenosine 3',5'-bisphosphate + n H(+). Its function is as follows. Catalyzes the transfer of sulfate to position 4 of the N-acetylgalactosamine (GalNAc) residue of chondroitin and desulfated dermatan sulfate. Chondroitin sulfate constitutes the predominant proteoglycan present in cartilage and is distributed on the surfaces of many cells and extracellular matrices. This Xenopus laevis (African clawed frog) protein is Carbohydrate sulfotransferase 12 (chst12).